The chain runs to 159 residues: Putative RING-H2 finger protein ATL69 (159 aa).

A helical membrane pass occupies residues 13-33 (LGYGIAIAVSILVLISFIMLA). An RING-type; atypical zinc finger spans residues 94-136 (CSICLCDYEAREPVRCIPECNHCFHTDCVDEWLRTSATCPLCR).

It belongs to the RING-type zinc finger family. ATL subfamily.

The protein localises to the membrane. The enzyme catalyses S-ubiquitinyl-[E2 ubiquitin-conjugating enzyme]-L-cysteine + [acceptor protein]-L-lysine = [E2 ubiquitin-conjugating enzyme]-L-cysteine + N(6)-ubiquitinyl-[acceptor protein]-L-lysine.. It functions in the pathway protein modification; protein ubiquitination. This chain is Putative RING-H2 finger protein ATL69 (ATL69), found in Arabidopsis thaliana (Mouse-ear cress).